The primary structure comprises 688 residues: Telomere length regulation protein TEL2 (688 aa).

Phosphoserine occurs at positions 417 and 419.

It belongs to the TEL2 family. Component of the TTT complex composed of TEL2, TTI1 and TTI2. Interacts with TTI1 and TTI2.

Its subcellular location is the nucleus. The protein resides in the chromosome. It is found in the telomere. Its function is as follows. Part of the TTT complex that is required to stabilize protein levels of the phosphatidylinositol 3-kinase-related protein kinase (PIKK) family proteins. Required for telomere length regulation and telomere position effect. Regulates telomere length and participates in gene silencing at subtelomeric regions. Binds to telomeric DNA repeats. This Saccharomyces cerevisiae (strain ATCC 204508 / S288c) (Baker's yeast) protein is Telomere length regulation protein TEL2 (TEL2).